The chain runs to 351 residues: Cyanuric acid amidohydrolase (351 aa).

The interval 1-96 (MPSLRAHVFR…HWTVFARETV (96 aa)) is RU A. Substrate-binding positions include arginine 53 and 77–78 (SG). The interval 103-240 (ALAIGVSRTP…HEIIVLGMSA (138 aa)) is RU B. Lysine 153 is a catalytic residue. Residues arginine 185 and 223–224 (SS) each bind substrate. Catalysis depends on serine 223, which acts as the Nucleophile. Residues 246–351 (LSIDHAVMLD…PVAIIVEKEQ (106 aa)) are RU C. Glutamate 283 contacts Mg(2+). Substrate-binding positions include arginine 310 and 329–330 (SG). Mg(2+) is bound by residues alanine 332, glutamine 335, glycine 336, proline 337, and glycine 340.

This sequence belongs to the cyclic amide hydrolase (CyAH) family. As to quaternary structure, homotetramer.

It carries out the reaction cyanurate + H2O = 1-carboxybiuret + H(+). It participates in xenobiotic degradation; atrazine degradation; biuret from cyanurate: step 1/1. Inhibited by barbituric acid. Functionally, responsible for the hydrolysis of cyanuric acid, an intermediate formed during catabolism of s-triazine based compounds in herbicides such as atrazine and polymers such as melamine. Catalyzes the hydrolytic opening of the s-triazine ring of cyanuric acid (2,4,6-trihydroxy-s-triazine) to yield carbon dioxide and carboxybiuret, which spontaneously decarboxylates to biuret. The chain is Cyanuric acid amidohydrolase from Rhizobium leguminosarum bv. trifolii (strain WSM1325).